Consider the following 239-residue polypeptide: 7-cyano-7-deazaguanine synthase (239 aa).

ATP is bound at residue 8 to 18 (LSGGLDSPTVL). The Zn(2+) site is built by cysteine 188, cysteine 196, cysteine 199, and cysteine 202.

This sequence belongs to the QueC family. Zn(2+) is required as a cofactor.

The enzyme catalyses 7-carboxy-7-deazaguanine + NH4(+) + ATP = 7-cyano-7-deazaguanine + ADP + phosphate + H2O + H(+). The protein operates within purine metabolism; 7-cyano-7-deazaguanine biosynthesis. Functionally, catalyzes the ATP-dependent conversion of 7-carboxy-7-deazaguanine (CDG) to 7-cyano-7-deazaguanine (preQ(0)). In Picrophilus torridus (strain ATCC 700027 / DSM 9790 / JCM 10055 / NBRC 100828 / KAW 2/3), this protein is 7-cyano-7-deazaguanine synthase.